The chain runs to 265 residues: Sulfur carrier protein FdhD (265 aa).

The active-site Cysteine persulfide intermediate is Cys-107.

The protein belongs to the FdhD family.

It localises to the cytoplasm. Required for formate dehydrogenase (FDH) activity. Acts as a sulfur carrier protein that transfers sulfur from IscS to the molybdenum cofactor prior to its insertion into FDH. This is Sulfur carrier protein FdhD from Staphylococcus aureus (strain bovine RF122 / ET3-1).